We begin with the raw amino-acid sequence, 56 residues long: Large ribosomal subunit protein bL33 (56 aa).

A compositionally biased stretch (basic and acidic residues) spans M1 to L12. A disordered region spans residues M1–T30. Over residues T15–T25 the composition is skewed to polar residues.

Belongs to the bacterial ribosomal protein bL33 family.

The polypeptide is Large ribosomal subunit protein bL33 (Ralstonia nicotianae (strain ATCC BAA-1114 / GMI1000) (Ralstonia solanacearum)).